The sequence spans 527 residues: Bifunctional purine biosynthesis protein PurH (527 aa).

One can recognise an MGS-like domain in the interval A8 to V156.

This sequence belongs to the PurH family.

The enzyme catalyses (6R)-10-formyltetrahydrofolate + 5-amino-1-(5-phospho-beta-D-ribosyl)imidazole-4-carboxamide = 5-formamido-1-(5-phospho-D-ribosyl)imidazole-4-carboxamide + (6S)-5,6,7,8-tetrahydrofolate. It carries out the reaction IMP + H2O = 5-formamido-1-(5-phospho-D-ribosyl)imidazole-4-carboxamide. The protein operates within purine metabolism; IMP biosynthesis via de novo pathway; 5-formamido-1-(5-phospho-D-ribosyl)imidazole-4-carboxamide from 5-amino-1-(5-phospho-D-ribosyl)imidazole-4-carboxamide (10-formyl THF route): step 1/1. It functions in the pathway purine metabolism; IMP biosynthesis via de novo pathway; IMP from 5-formamido-1-(5-phospho-D-ribosyl)imidazole-4-carboxamide: step 1/1. This is Bifunctional purine biosynthesis protein PurH from Mycobacterium sp. (strain JLS).